Reading from the N-terminus, the 146-residue chain is Ribosome maturation factor RimP (146 aa).

Belongs to the RimP family.

It is found in the cytoplasm. Its function is as follows. Required for maturation of 30S ribosomal subunits. This is Ribosome maturation factor RimP from Helicobacter pylori (strain P12).